Consider the following 360-residue polypeptide: Phospho-N-acetylmuramoyl-pentapeptide-transferase (360 aa).

A run of 10 helical transmembrane segments spans residues 26-46 (GVLA…FFIA), 70-90 (GTPT…TLLW), 94-114 (GNPL…IGFV), 136-156 (LQSL…SNPV), 164-184 (FIPH…YFVI), 199-219 (GLAI…AYVS), 236-256 (SGQM…FLWF), 263-283 (VFMG…VAIV), 289-309 (VLFI…IQVV), and 339-359 (AVRF…SLKI).

The protein belongs to the glycosyltransferase 4 family. MraY subfamily. Requires Mg(2+) as cofactor.

The protein localises to the cell inner membrane. It catalyses the reaction UDP-N-acetyl-alpha-D-muramoyl-L-alanyl-gamma-D-glutamyl-meso-2,6-diaminopimeloyl-D-alanyl-D-alanine + di-trans,octa-cis-undecaprenyl phosphate = di-trans,octa-cis-undecaprenyl diphospho-N-acetyl-alpha-D-muramoyl-L-alanyl-D-glutamyl-meso-2,6-diaminopimeloyl-D-alanyl-D-alanine + UMP. Its pathway is cell wall biogenesis; peptidoglycan biosynthesis. In terms of biological role, catalyzes the initial step of the lipid cycle reactions in the biosynthesis of the cell wall peptidoglycan: transfers peptidoglycan precursor phospho-MurNAc-pentapeptide from UDP-MurNAc-pentapeptide onto the lipid carrier undecaprenyl phosphate, yielding undecaprenyl-pyrophosphoryl-MurNAc-pentapeptide, known as lipid I. This is Phospho-N-acetylmuramoyl-pentapeptide-transferase from Acidithiobacillus ferrooxidans (strain ATCC 23270 / DSM 14882 / CIP 104768 / NCIMB 8455) (Ferrobacillus ferrooxidans (strain ATCC 23270)).